Consider the following 212-residue polypeptide: Small ribosomal subunit protein eS1 (212 aa).

The protein belongs to the eukaryotic ribosomal protein eS1 family.

The protein is Small ribosomal subunit protein eS1 of Staphylothermus marinus (strain ATCC 43588 / DSM 3639 / JCM 9404 / F1).